The following is a 257-amino-acid chain: Adenylate kinase (257 aa).

52 to 57 (GAGKGT) lines the ATP pocket. The tract at residues 72–101 (ATGDMLRSQVAKKTELGKEAKKIMDQGGLV) is NMP. AMP is bound by residues Thr73, Arg78, 99-101 (GLV), 128-131 (GFPR), and Gln135. The tract at residues 169 to 206 (GRLVHPASGRSYHKIFNPPKNDMKDDVTGEPLIQRSDD) is LID. Residues Arg170 and 179–180 (SY) contribute to the ATP site. Residues Arg203 and Arg214 each contribute to the AMP site. Position 242 (Gln242) interacts with ATP.

The protein belongs to the adenylate kinase family. AK2 subfamily. Monomer.

Its subcellular location is the cytoplasm. The protein resides in the cytosol. It is found in the mitochondrion intermembrane space. It catalyses the reaction AMP + ATP = 2 ADP. Its function is as follows. Catalyzes the reversible transfer of the terminal phosphate group between ATP and AMP. Plays an important role in cellular energy homeostasis and in adenine nucleotide metabolism. Adenylate kinase activity is critical for regulation of the phosphate utilization and the AMP de novo biosynthesis pathways. This chain is Adenylate kinase (adk1), found in Aspergillus fumigatus (strain CBS 144.89 / FGSC A1163 / CEA10) (Neosartorya fumigata).